A 284-amino-acid polypeptide reads, in one-letter code: 4-diphosphocytidyl-2-C-methyl-D-erythritol kinase (284 aa).

Lysine 9 is an active-site residue. 90-100 (PLVSGLGGDSS) is a binding site for ATP. Aspartate 132 is an active-site residue.

It belongs to the GHMP kinase family. IspE subfamily.

It catalyses the reaction 4-CDP-2-C-methyl-D-erythritol + ATP = 4-CDP-2-C-methyl-D-erythritol 2-phosphate + ADP + H(+). Its pathway is isoprenoid biosynthesis; isopentenyl diphosphate biosynthesis via DXP pathway; isopentenyl diphosphate from 1-deoxy-D-xylulose 5-phosphate: step 3/6. Catalyzes the phosphorylation of the position 2 hydroxy group of 4-diphosphocytidyl-2C-methyl-D-erythritol. The chain is 4-diphosphocytidyl-2-C-methyl-D-erythritol kinase from Dehalococcoides mccartyi (strain ATCC BAA-2266 / KCTC 15142 / 195) (Dehalococcoides ethenogenes (strain 195)).